Here is a 343-residue protein sequence, read N- to C-terminus: tRNA N6-adenosine threonylcarbamoyltransferase (343 aa).

The Fe cation site is built by histidine 120 and histidine 124. Residues 142 to 146 (VVSGG), aspartate 175, glycine 188, aspartate 192, and asparagine 281 each bind substrate. A Fe cation-binding site is contributed by aspartate 310.

Belongs to the KAE1 / TsaD family. It depends on Fe(2+) as a cofactor.

Its subcellular location is the cytoplasm. The enzyme catalyses L-threonylcarbamoyladenylate + adenosine(37) in tRNA = N(6)-L-threonylcarbamoyladenosine(37) in tRNA + AMP + H(+). Required for the formation of a threonylcarbamoyl group on adenosine at position 37 (t(6)A37) in tRNAs that read codons beginning with adenine. Is involved in the transfer of the threonylcarbamoyl moiety of threonylcarbamoyl-AMP (TC-AMP) to the N6 group of A37, together with TsaE and TsaB. TsaD likely plays a direct catalytic role in this reaction. The polypeptide is tRNA N6-adenosine threonylcarbamoyltransferase (Bacillus thuringiensis subsp. konkukian (strain 97-27)).